Reading from the N-terminus, the 141-residue chain is Putative nickel-responsive regulator (141 aa).

Residues His-80, His-91, His-93, and Cys-99 each contribute to the Ni(2+) site.

It belongs to the transcriptional regulatory CopG/NikR family. The cofactor is Ni(2+).

Its function is as follows. Transcriptional regulator. The sequence is that of Putative nickel-responsive regulator from Methanococcus maripaludis (strain C7 / ATCC BAA-1331).